Reading from the N-terminus, the 691-residue chain is Kinetochore protein NDC80 (691 aa).

The disordered stretch occupies residues 1-95 (MQSSTSTDQH…LNDKSNSRNS (95 aa)). Residues 10 to 19 (HVLHHMDPHR) are compositionally biased toward basic and acidic residues. A compositionally biased stretch (polar residues) spans 20-42 (FTSQIPTATSSQLRRRNSTNQGL). Thr-38 carries the post-translational modification Phosphothreonine. The segment covering 54–65 (TISGTGIPTGGI) has biased composition (low complexity). Thr-248 is modified (phosphothreonine). Coiled-coil stretches lie at residues 376–446 (GKLE…SIKS) and 522–686 (KKSI…FETE).

It belongs to the NDC80/HEC1 family. In terms of assembly, component of the NDC80 complex, which consists of NDC80, NUF2, SPC24 and SPC25. The NDC80 complex is formed by two subcomplexes, NDC80-NUF2 and SPC24-SPC25, which are joined end-to-end through their coiled-coil domains. It has a rod-like structure with a length of 570 Angstroms and globular domains at either end. The NDC80-NUF2 globular domains are probably directed to microtubules, the SPC24-SPC25 globular domains to the centromere. NDC80 probably interacts with SMC1 and SMC2. Also interacts with KIN3. Interacts with DMC1.

The protein localises to the nucleus. It is found in the chromosome. The protein resides in the centromere. Its subcellular location is the kinetochore. Its function is as follows. Acts as a component of the essential kinetochore-associated NDC80 complex, which is involved in chromosome segregation and spindle checkpoint activity. In Saccharomyces cerevisiae (strain ATCC 204508 / S288c) (Baker's yeast), this protein is Kinetochore protein NDC80.